The sequence spans 402 residues: Multidrug resistance protein MdtH (402 aa).

Topologically, residues 1-12 (MSRVSQARNLGK) are cytoplasmic. The helical transmembrane segment at 13-33 (YFLLIDNMLVVLGFFVVFPLI) threads the bilayer. The Periplasmic segment spans residues 34–98 (SIRFVDQMGW…GFATMGIAHE (65 aa)). Residues 99-116 (PWLLWFSCLLSGLGGTLF) traverse the membrane as a helical segment. Residues 117–138 (DPPRSALVVKLIRPQQRGRFFS) lie on the Cytoplasmic side of the membrane. A helical membrane pass occupies residues 139-159 (LLMMQDSASAVIGALLGSWLL). Residues 160 to 164 (QYDFR) are Periplasmic-facing. The helical transmembrane segment at 165–185 (LVCATGPVLFVLCAAFNAWLL) threads the bilayer. The Cytoplasmic segment spans residues 186 to 213 (PAWKLSTVRTPVREGMTRVMRDKRFVTY). The chain crosses the membrane as a helical span at residues 214–234 (VLTLAGYYMLAVQVMLMLPIM). The Periplasmic segment spans residues 235-243 (VNDVAGAPS). The helical transmembrane segment at 244–264 (AVKWMYAIEACLSLTLLYPIA) threads the bilayer. The Cytoplasmic portion of the chain corresponds to 265-276 (RWSEKHFRLEHR). Residues 277-297 (LMAGLLIMSLSMMPVGMVSGL) form a helical membrane-spanning segment. Residues 298 to 299 (QQ) lie on the Periplasmic side of the membrane. A helical membrane pass occupies residues 300–320 (LFTLICLFYIGSIIAEPARET). Residues 321 to 339 (LSASLADARARGSYMGFSR) are Cytoplasmic-facing. The helical transmembrane segment at 340–360 (LGLAIGGAIGYIGGGWLFDLG) threads the bilayer. At 361–367 (KSAHQPE) the chain is on the periplasmic side. The helical transmembrane segment at 368–388 (LPWMMLGIIGIFTFLALGWQF) threads the bilayer. Residues 389–402 (SQKRAARRLLERDA) lie on the Cytoplasmic side of the membrane.

Belongs to the major facilitator superfamily. DHA1 family. MdtH (TC 2.A.1.2.21) subfamily.

The protein resides in the cell inner membrane. The polypeptide is Multidrug resistance protein MdtH (Shigella flexneri serotype 5b (strain 8401)).